The primary structure comprises 455 residues: Kynurenine 3-monooxygenase (455 aa).

It belongs to the aromatic-ring hydroxylase family. KMO subfamily. The cofactor is FAD.

The catalysed reaction is L-kynurenine + NADPH + O2 + H(+) = 3-hydroxy-L-kynurenine + NADP(+) + H2O. The protein operates within cofactor biosynthesis; NAD(+) biosynthesis; quinolinate from L-kynurenine: step 1/3. In terms of biological role, catalyzes the hydroxylation of L-kynurenine (L-Kyn) to form 3-hydroxy-L-kynurenine (L-3OHKyn). Required for synthesis of quinolinic acid. This Xanthomonas oryzae pv. oryzae (strain MAFF 311018) protein is Kynurenine 3-monooxygenase.